The following is a 205-amino-acid chain: Large ribosomal subunit protein eL15 (205 aa).

Disordered stretches follow at residues G70–N90 and R172–N197.

It belongs to the eukaryotic ribosomal protein eL15 family.

The protein is Large ribosomal subunit protein eL15 (rpl15-1) of Dictyostelium discoideum (Social amoeba).